The chain runs to 316 residues: DNA-directed RNA polymerase subunit alpha (316 aa).

Residues 1–229 (MLEMEKPRID…EYLKLFTEID (229 aa)) form an alpha N-terminal domain (alpha-NTD) region. The interval 246–316 (KDKILEMSIE…LNLSFRKSED (71 aa)) is alpha C-terminal domain (alpha-CTD).

The protein belongs to the RNA polymerase alpha chain family. Homodimer. The RNAP catalytic core consists of 2 alpha, 1 beta, 1 beta' and 1 omega subunit. When a sigma factor is associated with the core the holoenzyme is formed, which can initiate transcription.

The catalysed reaction is RNA(n) + a ribonucleoside 5'-triphosphate = RNA(n+1) + diphosphate. Its function is as follows. DNA-dependent RNA polymerase catalyzes the transcription of DNA into RNA using the four ribonucleoside triphosphates as substrates. In Syntrophomonas wolfei subsp. wolfei (strain DSM 2245B / Goettingen), this protein is DNA-directed RNA polymerase subunit alpha.